The sequence spans 260 residues: Shikimate dehydrogenase (NADP(+)) (260 aa).

Shikimate is bound by residues 14–16 and Thr-60; that span reads SAS. The active-site Proton acceptor is Lys-64. Positions 85 and 100 each coordinate shikimate. NADP(+)-binding positions include 121 to 125, 145 to 150, and Phe-201; these read GAGGA and NRTYER. A shikimate-binding site is contributed by Tyr-203. Gly-225 contributes to the NADP(+) binding site.

The protein belongs to the shikimate dehydrogenase family. Homodimer.

The catalysed reaction is shikimate + NADP(+) = 3-dehydroshikimate + NADPH + H(+). It participates in metabolic intermediate biosynthesis; chorismate biosynthesis; chorismate from D-erythrose 4-phosphate and phosphoenolpyruvate: step 4/7. Its function is as follows. Involved in the biosynthesis of the chorismate, which leads to the biosynthesis of aromatic amino acids. Catalyzes the reversible NADPH linked reduction of 3-dehydroshikimate (DHSA) to yield shikimate (SA). The sequence is that of Shikimate dehydrogenase (NADP(+)) from Pyrobaculum neutrophilum (strain DSM 2338 / JCM 9278 / NBRC 100436 / V24Sta) (Thermoproteus neutrophilus).